A 418-amino-acid chain; its full sequence is UDP-N-acetylglucosamine 1-carboxyvinyltransferase 2 (418 aa).

22–23 (KN) provides a ligand contact to phosphoenolpyruvate. R93 serves as a coordination point for UDP-N-acetyl-alpha-D-glucosamine. C117 functions as the Proton donor in the catalytic mechanism. Residue C117 is modified to 2-(S-cysteinyl)pyruvic acid O-phosphothioketal. UDP-N-acetyl-alpha-D-glucosamine-binding positions include 122–126 (RPIDQ), D305, and I327.

This sequence belongs to the EPSP synthase family. MurA subfamily.

It localises to the cytoplasm. The catalysed reaction is phosphoenolpyruvate + UDP-N-acetyl-alpha-D-glucosamine = UDP-N-acetyl-3-O-(1-carboxyvinyl)-alpha-D-glucosamine + phosphate. Its pathway is cell wall biogenesis; peptidoglycan biosynthesis. In terms of biological role, cell wall formation. Adds enolpyruvyl to UDP-N-acetylglucosamine. In Clostridium acetobutylicum (strain ATCC 824 / DSM 792 / JCM 1419 / IAM 19013 / LMG 5710 / NBRC 13948 / NRRL B-527 / VKM B-1787 / 2291 / W), this protein is UDP-N-acetylglucosamine 1-carboxyvinyltransferase 2.